A 429-amino-acid chain; its full sequence is TNFAIP3-interacting protein 2 (429 aa).

Residue Ser-7 is modified to Phosphoserine. Residues 29–117 adopt a coiled-coil conformation; the sequence is QRLRRLQDQL…MQQLLSQPQH (89 aa). The span at 177–195 shows a compositional bias: basic and acidic residues; it reads HAQRNVGERSPDQSEHTDG. The disordered stretch occupies residues 177–199; it reads HAQRNVGERSPDQSEHTDGHTSV. Coiled-coil stretches lie at residues 196 to 226 and 255 to 340; these read HTSV…LNAK and ELMR…QVSW. The ubiquitin-binding domain (UBD) stretch occupies residues 289–347; that stretch reads RDAALERVQMLEQQILAYKDDFMSERADRERAQSRIQELEEKVASLLHQVSWRQDSREP. Residues 372-400 are disordered; that stretch reads PGGWRPGTGSQQPEPPAEGGHPGAAQRGQ. The segment covering 388–397 has biased composition (low complexity); that stretch reads AEGGHPGAAQ. A CCHC NOA-type zinc finger spans residues 397–429; the sequence is QRGQGDLQCPHCLQCFSDEQGEELLRHVAECCQ. The Zn(2+) site is built by Cys-405, Cys-408, His-423, and Cys-427.

In terms of assembly, interacts with STK11/LKB1, TNFAIP3, IKBKG, NFKB1, MAP3K8, TEK, RIPK1, CHUK, IKBKB and SMARCD1. Interacts with polyubiquitin. (Microbial infection) Interacts with severe fever with thrombocytopenia syndrome virus (SFTSV) NSs; this interaction promotes TPL2 complex formation and signaling activity leading to IL-10 production. Post-translationally, in vitro phosphorylated by CHUK. In terms of processing, ubiquitinated; undergoes 'Lys-48'-linked polyubiquitination probably leading to constitutive proteasomal degradation which can be impaired by IKK-A/CHUK or IKBKB probably involving deubiquitination. Deubiquitinated by USP35; leading to stabilization and inhibition of TNFalpha-induced NF-kappa-B activation. Ubiquitously expressed in all tissues examined.

The protein localises to the cytoplasm. It localises to the nucleus. Its function is as follows. Inhibits NF-kappa-B activation by blocking the interaction of RIPK1 with its downstream effector NEMO/IKBKG. Forms a ternary complex with NFKB1 and MAP3K8 but appears to function upstream of MAP3K8 in the TLR4 signaling pathway that regulates MAP3K8 activation. Involved in activation of the MEK/ERK signaling pathway during innate immune response; this function seems to be stimulus- and cell type specific. Required for stability of MAP3K8. Involved in regulation of apoptosis in endothelial cells; promotes TEK agonist-stimulated endothelial survival. May act as transcriptional coactivator when translocated to the nucleus. Enhances CHUK-mediated NF-kappa-B activation involving NF-kappa-B p50-p65 and p50-c-Rel complexes. In Homo sapiens (Human), this protein is TNFAIP3-interacting protein 2.